The primary structure comprises 239 residues: Pyridoxine 5'-phosphate synthase (239 aa).

Residue Asn7 participates in 3-amino-2-oxopropyl phosphate binding. A 1-deoxy-D-xylulose 5-phosphate-binding site is contributed by 9–10; it reads DH. Residue Arg18 participates in 3-amino-2-oxopropyl phosphate binding. The active-site Proton acceptor is the His43. 1-deoxy-D-xylulose 5-phosphate-binding residues include Arg45 and His50. The active-site Proton acceptor is Glu70. Residue Thr100 coordinates 1-deoxy-D-xylulose 5-phosphate. Residue His191 is the Proton donor of the active site. Residues Gly192 and 213-214 contribute to the 3-amino-2-oxopropyl phosphate site; that span reads GH.

Belongs to the PNP synthase family. Homooctamer; tetramer of dimers.

It localises to the cytoplasm. It carries out the reaction 3-amino-2-oxopropyl phosphate + 1-deoxy-D-xylulose 5-phosphate = pyridoxine 5'-phosphate + phosphate + 2 H2O + H(+). It functions in the pathway cofactor biosynthesis; pyridoxine 5'-phosphate biosynthesis; pyridoxine 5'-phosphate from D-erythrose 4-phosphate: step 5/5. Catalyzes the complicated ring closure reaction between the two acyclic compounds 1-deoxy-D-xylulose-5-phosphate (DXP) and 3-amino-2-oxopropyl phosphate (1-amino-acetone-3-phosphate or AAP) to form pyridoxine 5'-phosphate (PNP) and inorganic phosphate. The protein is Pyridoxine 5'-phosphate synthase of Geobacter sp. (strain M21).